The sequence spans 377 residues: Chaperone protein DnaJ (377 aa).

The J domain maps to 5–69; that stretch reads DYYEVLGVSK…NKRANYDQFG (65 aa). The segment at 134–216 adopts a CR-type zinc-finger fold; that stretch reads GTEKEISIRK…CHGKGTETKN (83 aa). Zn(2+)-binding residues include Cys-147, Cys-150, Cys-164, Cys-167, Cys-190, Cys-193, Cys-204, and Cys-207. CXXCXGXG motif repeat units lie at residues 147 to 154, 164 to 171, 190 to 197, and 204 to 211; these read CETCDGSG, CHYCNGSG, CPVCNGTG, and CPTCHGKG.

The protein belongs to the DnaJ family. As to quaternary structure, homodimer. Requires Zn(2+) as cofactor.

It localises to the cytoplasm. Functionally, participates actively in the response to hyperosmotic and heat shock by preventing the aggregation of stress-denatured proteins and by disaggregating proteins, also in an autonomous, DnaK-independent fashion. Unfolded proteins bind initially to DnaJ; upon interaction with the DnaJ-bound protein, DnaK hydrolyzes its bound ATP, resulting in the formation of a stable complex. GrpE releases ADP from DnaK; ATP binding to DnaK triggers the release of the substrate protein, thus completing the reaction cycle. Several rounds of ATP-dependent interactions between DnaJ, DnaK and GrpE are required for fully efficient folding. Also involved, together with DnaK and GrpE, in the DNA replication of plasmids through activation of initiation proteins. The sequence is that of Chaperone protein DnaJ from Staphylococcus carnosus (strain TM300).